The sequence spans 1024 residues: Protein sumv-1 (1024 aa).

6 disordered regions span residues 447–486 (DASQ…KKMP), 501–564 (NFQG…RRGV), 577–617 (PSRH…RSQA), 645–664 (SQMA…GSPQ), 710–739 (VRSG…DTVQ), and 773–1024 (AGNS…EEEL). 3 stretches are compositionally biased toward polar residues: residues 467-486 (SFGT…KKMP), 501-514 (NFQG…SSAT), and 528-542 (RSQQ…QTQD). The segment covering 584-600 (SPLTPSTSTSSSQLLAP) has biased composition (low complexity). Over residues 605-617 (QPGTSSQTFRSQA) the composition is skewed to polar residues. Composition is skewed to low complexity over residues 710–730 (VRSG…ASGS) and 784–809 (AGAP…ASTS). Residues 810 to 832 (VPEPTKSSESSVDPQSDVSFSNP) are compositionally biased toward polar residues. The span at 859-870 (TLASESTSSEAT) shows a compositional bias: low complexity. Residues 873–883 (HDTTSSSSAET) are compositionally biased toward polar residues. A compositionally biased stretch (basic and acidic residues) spans 903 to 914 (PEKEKEKIDRPK). 3 stretches are compositionally biased toward low complexity: residues 916–943 (PKSS…NQAI), 952–962 (SASTSSSAAST), and 970–986 (LLAE…QQQA). The span at 987–998 (IGSTSKNGGSTK) shows a compositional bias: polar residues.

Its subcellular location is the nucleus. The protein localises to the cytoplasm. The protein resides in the cell projection. It is found in the axon. Its function is as follows. Nuclear factor that influences the activity of genes involved in vulval development. The polypeptide is Protein sumv-1 (Caenorhabditis elegans).